Reading from the N-terminus, the 79-residue chain is Small ribosomal subunit protein bS18 (79 aa).

The protein belongs to the bacterial ribosomal protein bS18 family. Part of the 30S ribosomal subunit. Forms a tight heterodimer with protein bS6.

Binds as a heterodimer with protein bS6 to the central domain of the 16S rRNA, where it helps stabilize the platform of the 30S subunit. The sequence is that of Small ribosomal subunit protein bS18 from Bacillus pumilus (strain SAFR-032).